The sequence spans 355 residues: Protein-glutamate methylesterase/protein-glutamine glutaminase 3 (355 aa).

A Response regulatory domain is found at 5-122; that stretch reads KVLIVDDSAV…KQFLEESRVR (118 aa). Asp56 is modified (4-aspartylphosphate). Positions 165 to 355 constitute a CheB-type methylesterase domain; sequence IQTTEKVVVV…IAREVLRLCG (191 aa). Residues Ser177, His203, and Asp299 contribute to the active site.

It belongs to the CheB family. Post-translationally, phosphorylated by CheA. Phosphorylation of the N-terminal regulatory domain activates the methylesterase activity.

Its subcellular location is the cytoplasm. It carries out the reaction [protein]-L-glutamate 5-O-methyl ester + H2O = L-glutamyl-[protein] + methanol + H(+). It catalyses the reaction L-glutaminyl-[protein] + H2O = L-glutamyl-[protein] + NH4(+). Involved in chemotaxis. Part of a chemotaxis signal transduction system that modulates chemotaxis in response to various stimuli. Catalyzes the demethylation of specific methylglutamate residues introduced into the chemoreceptors (methyl-accepting chemotaxis proteins or MCP) by CheR. Also mediates the irreversible deamidation of specific glutamine residues to glutamic acid. The sequence is that of Protein-glutamate methylesterase/protein-glutamine glutaminase 3 from Geobacter metallireducens (strain ATCC 53774 / DSM 7210 / GS-15).